Reading from the N-terminus, the 189-residue chain is GTP cyclohydrolase 1 (189 aa).

Cys80, His83, and Cys152 together coordinate Zn(2+).

This sequence belongs to the GTP cyclohydrolase I family. As to quaternary structure, toroid-shaped homodecamer, composed of two pentamers of five dimers.

It catalyses the reaction GTP + H2O = 7,8-dihydroneopterin 3'-triphosphate + formate + H(+). The protein operates within cofactor biosynthesis; 7,8-dihydroneopterin triphosphate biosynthesis; 7,8-dihydroneopterin triphosphate from GTP: step 1/1. The sequence is that of GTP cyclohydrolase 1 from Latilactobacillus sakei subsp. sakei (strain 23K) (Lactobacillus sakei subsp. sakei).